Consider the following 397-residue polypeptide: ATP-dependent RNA helicase eIF4A (397 aa).

The Q motif motif lies at 23–51 (YKFDDLNLKPNIVRGIFGYGYETPSAIQQ). The region spanning 54–224 (ILPITEGRDV…TKFMNNPVRI (171 aa)) is the Helicase ATP-binding domain. Residue 67–74 (AQSGTGKT) coordinates ATP. A DEAD box motif is present at residues 172-175 (DEAD). One can recognise a Helicase C-terminal domain in the interval 255 to 396 (DLYDSISVTQ…EMPADIGSLF (142 aa)).

This sequence belongs to the DEAD box helicase family. eIF4A subfamily. In terms of assembly, component of the eIF4F complex, which composition varies with external and internal environmental conditions. It is composed of at least eIF4A, eIF4E and eIF4G.

Its subcellular location is the cytoplasm. The enzyme catalyses ATP + H2O = ADP + phosphate + H(+). ATP-dependent RNA helicase which is a subunit of the eIF4F complex involved in cap recognition and is required for mRNA binding to ribosome. In the current model of translation initiation, eIF4A unwinds RNA secondary structures in the 5'-UTR of mRNAs which is necessary to allow efficient binding of the small ribosomal subunit, and subsequent scanning for the initiator codon. This is ATP-dependent RNA helicase eIF4A (TIF1) from Lodderomyces elongisporus (strain ATCC 11503 / CBS 2605 / JCM 1781 / NBRC 1676 / NRRL YB-4239) (Yeast).